A 571-amino-acid polypeptide reads, in one-letter code: Germacrene B synthase TPS16CC (571 aa).

Positions 287, 324, 328, 465, and 468 each coordinate (2E,6E)-farnesyl diphosphate. The Mg(2+) site is built by Asp-324 and Asp-328. Positions 324-328 match the DDXXD motif motif; it reads DDIYD. Mg(2+) is bound by residues Asp-468, Ser-472, and Glu-476.

The protein belongs to the terpene synthase family. Tpsb subfamily. It depends on Mg(2+) as a cofactor. Mn(2+) is required as a cofactor. In terms of tissue distribution, highly expressed in glandular trichomes.

The enzyme catalyses (2E,6E)-farnesyl diphosphate = (1E,4E)-germacrene B + diphosphate. The protein operates within secondary metabolite biosynthesis; terpenoid biosynthesis. Involved in sesquiterpene olefins biosynthesis, constituants of cannabinoids and terpenoids-rich resins. Catalyzes mainly the conversion of (2E)-farnesyl diphosphate to germacrene B, which is spontaneously converted to gamma-elemene as a thermal degradation product. This is Germacrene B synthase TPS16CC from Cannabis sativa (Hemp).